A 153-amino-acid chain; its full sequence is Large ribosomal subunit protein uL30 (153 aa).

Belongs to the universal ribosomal protein uL30 family. As to quaternary structure, part of the 50S ribosomal subunit.

This chain is Large ribosomal subunit protein uL30, found in Methanoculleus marisnigri (strain ATCC 35101 / DSM 1498 / JR1).